Consider the following 117-residue polypeptide: Putative small ubiquitin-related modifier 6 (117 aa).

Residues 1-30 are disordered; sequence MSTKSSSIHGRNEVKMEGEKRKDVESESTH. Over residues 10–28 the composition is skewed to basic and acidic residues; it reads GRNEVKMEGEKRKDVESES. The 78-residue stretch at 31 to 108 folds into the Ubiquitin-like domain; it reads VTLNVKGQDE…IDALLPQESG (78 aa). Residue glycine 108 forms a Glycyl lysine isopeptide (Gly-Lys) (interchain with K-? in acceptor proteins) linkage.

This sequence belongs to the ubiquitin family. SUMO subfamily. In terms of assembly, interacts with SAE2, SCE1, SIZ1 and MMS21 Covalently attached to a number of proteins.

It localises to the nucleus. Its subcellular location is the cytoplasm. Its function is as follows. Ubiquitin-like protein which can be covalently attached to target lysines as a monomer. Does not seem to be involved in protein degradation and may function as an antagonist of ubiquitin in the degradation process. The sequence is that of Putative small ubiquitin-related modifier 6 (SUMO6) from Arabidopsis thaliana (Mouse-ear cress).